Here is a 713-residue protein sequence, read N- to C-terminus: Serologically defined colon cancer antigen 8 (713 aa).

2 positions are modified to phosphoserine: Ser4 and Ser28. The interval 84 to 103 (QADKESEVSPSRRRKMSPLR) is disordered. Positions 129–175 (IHHLEAEVKFCKEELSGMKNKIQVVVLENEGLQQQLKSQRQEETLRE) form a coiled coil. The tract at residues 194–215 (EDSGVGETSKRPFSHDNADFGK) is disordered. Over residues 201 to 212 (TSKRPFSHDNAD) the composition is skewed to basic and acidic residues. Residues 216–713 (AASAGEQLEL…QLPSMPQSDC (498 aa)) form a sufficient for homodimerization region. Coiled coils occupy residues 223–273 (LELE…LLAA) and 348–707 (EEAN…QLPS). The mediates interaction with OFD1 stretch occupies residues 533 to 713 (HQLHLTRQEK…QLPSMPQSDC (181 aa)).

As to quaternary structure, homodimer. Interacts with OFD1; the interaction is direct. Interacts with FAM161A. Interacts with RABEP2, ERC1 and CEP131. Expressed in thymus, prostate, testis, ovary, small intestine, colon, mucosa, colon and renal cancer tumors.

The protein localises to the cytoplasm. Its subcellular location is the cytoskeleton. It is found in the microtubule organizing center. The protein resides in the centrosome. It localises to the centriole. The protein localises to the cilium basal body. Its subcellular location is the cell junction. Its function is as follows. Plays a role in the establishment of cell polarity and epithelial lumen formation. Also plays an essential role in ciliogenesis and subsequent Hedgehog signaling pathway that requires the presence of intact primary cilia for pathway activation. Mechanistically, interacts with and mediates RABEP2 centrosomal localization which is critical for ciliogenesis. In Homo sapiens (Human), this protein is Serologically defined colon cancer antigen 8 (SDCCAG8).